An 886-amino-acid chain; its full sequence is cytokinesis protein 3 (886 aa).

One can recognise an SH3 domain in the interval Gln-6–Ile-67. The span at Pro-72 to Ser-88 shows a compositional bias: low complexity. Residues Pro-72–Leu-189 form a disordered region. A compositionally biased stretch (polar residues) spans Pro-89–Gly-104. The span at Leu-135–Ser-154 shows a compositional bias: low complexity. Over residues Met-155–Pro-188 the composition is skewed to polar residues. Residue Ser-213 is modified to Phosphoserine. 2 disordered regions span residues Thr-219–Asp-290 and Arg-358–Thr-393. A compositionally biased stretch (polar residues) spans Asp-253–Pro-264.

Belongs to the CYK3 family.

The protein localises to the cell tip. Functionally, involved in cytokinesis. This is cytokinesis protein 3 (cyk3) from Schizosaccharomyces pombe (strain 972 / ATCC 24843) (Fission yeast).